The following is a 463-amino-acid chain: Kynureninase 2 (463 aa).

Residues Leu-134, Thr-135, 162 to 165 (FPSD), Asp-247, His-250, and Tyr-272 contribute to the pyridoxal 5'-phosphate site. Residue Lys-273 is modified to N6-(pyridoxal phosphate)lysine. The pyridoxal 5'-phosphate site is built by Trp-312 and Asn-340.

It belongs to the kynureninase family. As to quaternary structure, homodimer. Pyridoxal 5'-phosphate serves as cofactor.

Its subcellular location is the cytoplasm. The enzyme catalyses L-kynurenine + H2O = anthranilate + L-alanine + H(+). The catalysed reaction is 3-hydroxy-L-kynurenine + H2O = 3-hydroxyanthranilate + L-alanine + H(+). It functions in the pathway amino-acid degradation; L-kynurenine degradation; L-alanine and anthranilate from L-kynurenine: step 1/1. The protein operates within cofactor biosynthesis; NAD(+) biosynthesis; quinolinate from L-kynurenine: step 2/3. Catalyzes the cleavage of L-kynurenine (L-Kyn) and L-3-hydroxykynurenine (L-3OHKyn) into anthranilic acid (AA) and 3-hydroxyanthranilic acid (3-OHAA), respectively. In Aspergillus terreus (strain NIH 2624 / FGSC A1156), this protein is Kynureninase 2 (bna5-2).